The following is a 322-amino-acid chain: N-acetyl-gamma-glutamyl-phosphate reductase (322 aa).

Cys117 is a catalytic residue.

The protein belongs to the NAGSA dehydrogenase family. Type 2 subfamily.

The protein localises to the cytoplasm. The catalysed reaction is N-acetyl-L-glutamate 5-semialdehyde + phosphate + NADP(+) = N-acetyl-L-glutamyl 5-phosphate + NADPH + H(+). The protein operates within amino-acid biosynthesis; L-arginine biosynthesis; N(2)-acetyl-L-ornithine from L-glutamate: step 3/4. Functionally, catalyzes the NADPH-dependent reduction of N-acetyl-5-glutamyl phosphate to yield N-acetyl-L-glutamate 5-semialdehyde. This Trichormus variabilis (strain ATCC 29413 / PCC 7937) (Anabaena variabilis) protein is N-acetyl-gamma-glutamyl-phosphate reductase.